The following is a 359-amino-acid chain: Uroporphyrinogen decarboxylase (359 aa).

7 residues coordinate coproporphyrinogen III: Arg-28, Ala-30, Arg-32, Asp-79, Tyr-157, Ser-212, and His-335.

This sequence belongs to the uroporphyrinogen decarboxylase family. In terms of assembly, monomer.

It is found in the nucleus. It localises to the cytoplasm. The catalysed reaction is uroporphyrinogen III + 4 H(+) = coproporphyrinogen III + 4 CO2. The enzyme catalyses uroporphyrinogen I + 4 H(+) = coproporphyrinogen I + 4 CO2. It participates in porphyrin-containing compound metabolism; protoporphyrin-IX biosynthesis; coproporphyrinogen-III from 5-aminolevulinate: step 4/4. Catalyzes the sequential decarboxylation of four acetate groups of uroporphyrinogen-III (octacarboxyporphyrin) to yield coproporphyrinogen-III (tetracarboxyporphyrin) with the formation of intermediate hepta-, hexa- and penta-carboxylate porphyrinogens in the heme biosynthesis pathway. Acts on a number of porphyrinogens, but only coproporphyrinogen III can ultimately be converted to heme. The polypeptide is Uroporphyrinogen decarboxylase (hem12) (Schizosaccharomyces pombe (strain 972 / ATCC 24843) (Fission yeast)).